The sequence spans 532 residues: Phosphoribosylamine--glycine ligase, chloroplastic (532 aa).

Residues 1-75 (MSSLCASNCY…IQRRLFLLRC (75 aa)) constitute a chloroplast transit peptide. One can recognise an ATP-grasp domain in the interval 204-412 (KNLCHKYNIP…LAKVLLAACK (209 aa)).

The protein belongs to the GARS family.

It is found in the plastid. The protein localises to the chloroplast. It carries out the reaction 5-phospho-beta-D-ribosylamine + glycine + ATP = N(1)-(5-phospho-beta-D-ribosyl)glycinamide + ADP + phosphate + H(+). The protein operates within purine metabolism; IMP biosynthesis via de novo pathway; N(1)-(5-phospho-D-ribosyl)glycinamide from 5-phospho-alpha-D-ribose 1-diphosphate: step 2/2. The sequence is that of Phosphoribosylamine--glycine ligase, chloroplastic (PUR2) from Arabidopsis thaliana (Mouse-ear cress).